A 434-amino-acid chain; its full sequence is Adenylosuccinate synthetase (434 aa).

Residues 15–21 (GDEGKGK) and 43–45 (GHT) contribute to the GTP site. Asp16 functions as the Proton acceptor in the catalytic mechanism. Positions 16 and 43 each coordinate Mg(2+). Residues 16-19 (DEGK), 41-44 (NAGH), Thr133, Arg147, Gln228, Thr243, and Arg307 contribute to the IMP site. The active-site Proton donor is the His44. Position 303–309 (303–309 (SVTGRAR)) interacts with substrate. GTP is bound by residues Arg309, 335 to 337 (KLD), and 418 to 420 (STG).

This sequence belongs to the adenylosuccinate synthetase family. In terms of assembly, homodimer. Mg(2+) serves as cofactor.

The protein localises to the cytoplasm. The catalysed reaction is IMP + L-aspartate + GTP = N(6)-(1,2-dicarboxyethyl)-AMP + GDP + phosphate + 2 H(+). Its pathway is purine metabolism; AMP biosynthesis via de novo pathway; AMP from IMP: step 1/2. Functionally, plays an important role in the de novo pathway of purine nucleotide biosynthesis. Catalyzes the first committed step in the biosynthesis of AMP from IMP. The polypeptide is Adenylosuccinate synthetase (Neisseria gonorrhoeae (strain NCCP11945)).